The chain runs to 450 residues: Glutamyl-tRNA(Gln) amidotransferase subunit A, mitochondrial (450 aa).

Active-site charge relay system residues include Lys47 and Ser122. Residue Ser146 is the Acyl-ester intermediate of the active site.

This sequence belongs to the amidase family. GatA subfamily. Subunit of the heterotrimeric GatFAB amidotransferase (AdT) complex, composed of A, B and F subunits.

It localises to the mitochondrion. It carries out the reaction L-glutamyl-tRNA(Gln) + L-glutamine + ATP + H2O = L-glutaminyl-tRNA(Gln) + L-glutamate + ADP + phosphate + H(+). Allows the formation of correctly charged Gln-tRNA(Gln) through the transamidation of misacylated Glu-tRNA(Gln) in the mitochondria. The reaction takes place in the presence of glutamine and ATP through an activated gamma-phospho-Glu-tRNA(Gln). The polypeptide is Glutamyl-tRNA(Gln) amidotransferase subunit A, mitochondrial (Candida albicans (strain WO-1) (Yeast)).